The chain runs to 411 residues: Tyrosine--tRNA ligase (411 aa).

Tyrosine 34 contacts L-tyrosine. The short motif at 39 to 48 is the 'HIGH' region element; the sequence is CTATSLHIGS. Tyrosine 171 and glutamine 175 together coordinate L-tyrosine. The 'KMSKS' region motif lies at 231–235; it reads KMGKT. ATP is bound at residue lysine 234. The 67-residue stretch at 345–411 folds into the S4 RNA-binding domain; sequence ISAYELFYEA…GKKRHILVRV (67 aa).

The protein belongs to the class-I aminoacyl-tRNA synthetase family. TyrS type 1 subfamily. As to quaternary structure, homodimer.

The protein localises to the cytoplasm. The enzyme catalyses tRNA(Tyr) + L-tyrosine + ATP = L-tyrosyl-tRNA(Tyr) + AMP + diphosphate + H(+). In terms of biological role, catalyzes the attachment of tyrosine to tRNA(Tyr) in a two-step reaction: tyrosine is first activated by ATP to form Tyr-AMP and then transferred to the acceptor end of tRNA(Tyr). The polypeptide is Tyrosine--tRNA ligase (Rickettsia rickettsii (strain Sheila Smith)).